The primary structure comprises 129 residues: Lysozyme C (129 aa).

Residues 1-129 (KVYGRCELAA…VNAWTRGCRL (129 aa)) enclose the C-type lysozyme domain. Cystine bridges form between Cys6–Cys127, Cys30–Cys115, Cys64–Cys80, and Cys76–Cys94. Residues Glu35 and Asp52 contribute to the active site.

This sequence belongs to the glycosyl hydrolase 22 family. Monomer.

The protein localises to the secreted. The enzyme catalyses Hydrolysis of (1-&gt;4)-beta-linkages between N-acetylmuramic acid and N-acetyl-D-glucosamine residues in a peptidoglycan and between N-acetyl-D-glucosamine residues in chitodextrins.. Its function is as follows. Lysozymes have primarily a bacteriolytic function; those in tissues and body fluids are associated with the monocyte-macrophage system and enhance the activity of immunoagents. The sequence is that of Lysozyme C (LYZ) from Chrysolophus amherstiae (Lady Amherst's pheasant).